The sequence spans 310 residues: 4-hydroxy-3-methylbut-2-enyl diphosphate reductase (310 aa).

A [4Fe-4S] cluster-binding site is contributed by Cys-12. Residues His-41 and His-74 each contribute to the (2E)-4-hydroxy-3-methylbut-2-enyl diphosphate site. The dimethylallyl diphosphate site is built by His-41 and His-74. The isopentenyl diphosphate site is built by His-41 and His-74. Cys-96 lines the [4Fe-4S] cluster pocket. Residue His-124 coordinates (2E)-4-hydroxy-3-methylbut-2-enyl diphosphate. A dimethylallyl diphosphate-binding site is contributed by His-124. Residue His-124 participates in isopentenyl diphosphate binding. The active-site Proton donor is Glu-126. (2E)-4-hydroxy-3-methylbut-2-enyl diphosphate is bound at residue Thr-167. [4Fe-4S] cluster is bound at residue Cys-197. The (2E)-4-hydroxy-3-methylbut-2-enyl diphosphate site is built by Ser-225, Ser-226, Asn-227, and Ser-269. Residues Ser-225, Ser-226, Asn-227, and Ser-269 each contribute to the dimethylallyl diphosphate site. Isopentenyl diphosphate-binding residues include Ser-225, Ser-226, Asn-227, and Ser-269.

The protein belongs to the IspH family. It depends on [4Fe-4S] cluster as a cofactor.

The catalysed reaction is isopentenyl diphosphate + 2 oxidized [2Fe-2S]-[ferredoxin] + H2O = (2E)-4-hydroxy-3-methylbut-2-enyl diphosphate + 2 reduced [2Fe-2S]-[ferredoxin] + 2 H(+). It catalyses the reaction dimethylallyl diphosphate + 2 oxidized [2Fe-2S]-[ferredoxin] + H2O = (2E)-4-hydroxy-3-methylbut-2-enyl diphosphate + 2 reduced [2Fe-2S]-[ferredoxin] + 2 H(+). The protein operates within isoprenoid biosynthesis; dimethylallyl diphosphate biosynthesis; dimethylallyl diphosphate from (2E)-4-hydroxy-3-methylbutenyl diphosphate: step 1/1. Its pathway is isoprenoid biosynthesis; isopentenyl diphosphate biosynthesis via DXP pathway; isopentenyl diphosphate from 1-deoxy-D-xylulose 5-phosphate: step 6/6. Functionally, catalyzes the conversion of 1-hydroxy-2-methyl-2-(E)-butenyl 4-diphosphate (HMBPP) into a mixture of isopentenyl diphosphate (IPP) and dimethylallyl diphosphate (DMAPP). Acts in the terminal step of the DOXP/MEP pathway for isoprenoid precursor biosynthesis. The polypeptide is 4-hydroxy-3-methylbut-2-enyl diphosphate reductase (Tolumonas auensis (strain DSM 9187 / NBRC 110442 / TA 4)).